A 1463-amino-acid polypeptide reads, in one-letter code: DNA polymerase III PolC-type (1463 aa).

In terms of domain architecture, Exonuclease spans 425 to 581; the sequence is YVVFDVETTG…YDAEATGRLL (157 aa).

It belongs to the DNA polymerase type-C family. PolC subfamily.

The protein localises to the cytoplasm. It carries out the reaction DNA(n) + a 2'-deoxyribonucleoside 5'-triphosphate = DNA(n+1) + diphosphate. Its function is as follows. Required for replicative DNA synthesis. This DNA polymerase also exhibits 3' to 5' exonuclease activity. This is DNA polymerase III PolC-type from Streptococcus pneumoniae serotype 2 (strain D39 / NCTC 7466).